A 424-amino-acid chain; its full sequence is tRNA (guanine-N(7)-)-methyltransferase non-catalytic subunit wuho (424 aa).

Residues 42–92 form a disordered region; it reads LKGHTSQSQESCTAAAAASTATAASGQAPGGKEQQLANQPEEGGTSASASG. The span at 46–68 shows a compositional bias: low complexity; sequence TSQSQESCTAAAAASTATAASGQ. WD repeat units lie at residues 96–137, 184–223, 227–265, and 324–364; these read ATST…ARLL, GHLS…DIHS, GHRE…ELLQ, and AGSW…PASS.

It belongs to the WD repeat TRM82 family. As to quaternary structure, forms a heterodimer with the catalytic subunit Mettl1. Interacts with mei-P26 and weakly interacts with bgcn; required for the function or formation of the mei-P26-bgcn-bam-sxl complex. Interacts with nanos; may be involved in mei-P26-dependent derepression of the BMP signaling pathway. Interacts with Myc; the interaction may be mediated by mei-P26 and may be involved in the regulation of ribosome biogenesis. As to expression, in testis, it is present at high level in hub cells, a niche for germline stem cells of testis. Ubiquitously expressed in all testicular cells throughout spermatogenesis. Ubiquitously expressed in all germline and somatic cells of the ovary.

It is found in the nucleus. The protein localises to the cytoplasm. The protein operates within tRNA modification; N(7)-methylguanine-tRNA biosynthesis. Functionally, required for the Mettl1-dependent formation of N(7)-methylguanine at position 46 (m7G46) in tRNA. In the Mettl1-wuho methyltransferase complex, it is required to stabilize and induce conformational changes of the catalytic subunit. Required for binding of nanos mRNA and repression of translation by the mei-P26-bgcn-bam-sxl complex. May cooperate with mei-P26 and nanos to derepress the BMP signaling pathway. May cooperate with mei-P26 to suppress expression of a subset of microRNAs. May cooperate with mei-P26 to regulate bam expression levels in germline cells during gametogenesis. Required to promote mitosis to meiosis transition during gametogenesis. May regulate germline cell division in part by regulating ribosome biogenesis. This is tRNA (guanine-N(7)-)-methyltransferase non-catalytic subunit wuho from Drosophila melanogaster (Fruit fly).